A 122-amino-acid polypeptide reads, in one-letter code: Large ribosomal subunit protein uL14 (122 aa).

The protein belongs to the universal ribosomal protein uL14 family. As to quaternary structure, part of the 50S ribosomal subunit. Forms a cluster with proteins L3 and L19. In the 70S ribosome, L14 and L19 interact and together make contacts with the 16S rRNA in bridges B5 and B8.

In terms of biological role, binds to 23S rRNA. Forms part of two intersubunit bridges in the 70S ribosome. This Heliobacterium modesticaldum (strain ATCC 51547 / Ice1) protein is Large ribosomal subunit protein uL14.